The sequence spans 2694 residues: Teneurin-3 (2694 aa).

3 disordered regions span residues 1 to 45, 106 to 132, and 161 to 198; these read MDVK…SSSE, PSSL…DNQS, and TQPA…PSVT. In terms of domain architecture, Teneurin N-terminal spans 1 to 306; the sequence is MDVKERRPYC…KSSKYCSWRC (306 aa). Topologically, residues 1–312 are cytoplasmic; sequence MDVKERRPYC…SWRCTALSAM (312 aa). Over residues 163-184 the composition is skewed to polar residues; sequence PAPSHSCNEQPSNQHQQGQSTL. The helical transmembrane segment at 313–333 threads the bilayer; the sequence is AVSILLSVLLCYCIAMHLFGL. The Extracellular segment spans residues 334–2694; the sequence is NWQLQETEGY…FLRQSEIGKR (2361 aa). N-linked (GlcNAc...) asparagine glycosylation is found at Asn-374 and Asn-413. EGF-like domains are found at residues 508-539, 540-570, 572-604, 605-636, 638-671, 672-703, 704-733, and 734-768; these read TLTE…PDCS, RAAC…TECD, PSNQ…DNCE, EVDC…NNCE, LKTM…PDCS, IEVC…VCDL, KACH…EHCT, and VEGC…AGCD. Intrachain disulfides connect Cys-512/Cys-522, Cys-516/Cys-527, Cys-529/Cys-538, Cys-547/Cys-558, Cys-560/Cys-569, Cys-576/Cys-587, Cys-581/Cys-592, Cys-594/Cys-603, Cys-608/Cys-619, Cys-613/Cys-624, Cys-626/Cys-635, Cys-646/Cys-659, Cys-661/Cys-670, Cys-675/Cys-685, Cys-679/Cys-690, Cys-692/Cys-701, Cys-706/Cys-716, Cys-710/Cys-721, Cys-723/Cys-732, Cys-737/Cys-747, Cys-741/Cys-756, and Cys-758/Cys-767. A glycan (N-linked (GlcNAc...) asparagine) is linked at Asn-664. 3 N-linked (GlcNAc...) asparagine glycosylation sites follow: Asn-854, Asn-877, and Asn-1048. NHL repeat units lie at residues 1166-1192, 1194-1238, 1264-1308, 1325-1365, and 1452-1495; these read LLAP…RRIF, SGNV…PKAL, ARCG…NGII, CDNS…ITEN, and CYQT…IRHN. The N-linked (GlcNAc...) asparagine glycan is linked to Asn-1196. Residues 1505–1524 form a YD 1 repeat; sequence FEVASPASQELYVFDSNGTH. N-linked (GlcNAc...) asparagine glycans are attached at residues Asn-1521 and Asn-1538. 3 YD repeats span residues 1541 to 1561, 1604 to 1623, and 1624 to 1646; these read YSNE…LRVR, YHGN…WTTF, and YDYD…TSLI. Residues Asn-1634, Asn-1671, Asn-1729, and Asn-1814 are each glycosylated (N-linked (GlcNAc...) asparagine). 18 YD repeats span residues 1817–1836, 1858–1876, 1877–1897, 1904–1921, 1922–1943, 1944–1961, 1964–1984, 1987–2007, 2015–2034, 2040–2057, 2058–2084, 2086–2099, 2100–2123, 2126–2146, 2147–2167, 2169–2189, 2201–2221, and 2223–2243; these read YSST…ERVE, YLDK…YIFD, YDLQ…HTMQ, YYRN…VTVD, YSED…VLYK, YRRQ…TRVS, YDET…FICS, YRQI…DGMV, YDNS…TPLP, FDDI…GVIY, YDIN…IKEI, YEIF…ITIQ, YDNM…TKYG, YDVD…WRYN, YDLN…LTPL, YDLR…DEDG, YNSK…TIQY, and YDGL…LQFF. Asn-1915 carries N-linked (GlcNAc...) asparagine glycosylation. Asn-2118 carries an N-linked (GlcNAc...) asparagine glycan. Asn-2258 carries an N-linked (GlcNAc...) asparagine glycan. The YD 23 repeat unit spans residues 2269 to 2310; sequence YDLQGHLFAMEISSGEEFYIACDNTGTPLAVFSSNGLLLKQV. A glycan (N-linked (GlcNAc...) asparagine) is linked at Asn-2571.

Belongs to the tenascin family. Teneurin subfamily. In terms of assembly, homodimer; disulfide-linked; to mediate homophilic cell adhesion. As to expression, expressed by retinal ganglion cells and their presynaptic amacrine and postsynaptic tectal cell targets.

The protein localises to the cell membrane. The protein resides in the cell projection. Its subcellular location is the axon. Involved in neural development by regulating the establishment of proper connectivity within the nervous system. Acts in both pre- and postsynaptic neurons in the hippocampus to control the assembly of a precise topographic projection: required in both CA1 and subicular neurons for the precise targeting of proximal CA1 axons to distal subiculum, probably by promoting homophilic cell adhesion. Required by retinal ganglion cells for acquisition of their correct morphological and functional connectivity, thereby playing a key role in the development of the visual pathway. In Danio rerio (Zebrafish), this protein is Teneurin-3 (tenm3).